Reading from the N-terminus, the 577-residue chain is Galectin-3-binding protein (577 aa).

The N-terminal stretch at 1–18 (MALLWLLSVFLLVPGTQG) is a signal peptide. An SRCR domain is found at 24 to 124 (MRLVNGASAN…HEKDAGVVCS (101 aa)). 3 disulfide bridges follow: C49/C113, C62/C123, and C93/C103. A glycan (N-linked (GlcNAc...) asparagine) is linked at N69. Residue N125 is glycosylated (N-linked (GlcNAc...) asparagine). In terms of domain architecture, BTB spans 153–221 (CDLFIQVTGQ…FYSRRIEVSM (69 aa)). Residues 260–360 (PLDLYAYARA…MLPQELFELQ (101 aa)) form the BACK domain. N362, N398, N543, and N572 each carry an N-linked (GlcNAc...) asparagine glycan.

Homodimers and homomultimers. The multimers form ring-like structures with a diameter of 30-40 nm. Binds LGALS1 and LGALS3. Binds ITGB1, COL4A1, COL5A1, COL6A1, FN1 and NID. Interacts with PPIC (in vitro). The unglycosylated form interacts with PDE4DIP isoform 2/MMG8/SMYLE; this interaction may connect a pericentrosomal complex to the gamma-tubulin ring complex (gamma-TuRC) to promote microtubule assembly and acetylation. N-glycosylated. Detected in embryo, liver, spleen, kidney, lung, heart, intestine, thymus and lymph node.

Its subcellular location is the secreted. The protein localises to the extracellular space. It is found in the extracellular matrix. Promotes integrin-mediated cell adhesion. May stimulate host defense against viruses and tumor cells. This chain is Galectin-3-binding protein (Lgals3bp), found in Mus musculus (Mouse).